A 194-amino-acid polypeptide reads, in one-letter code: Fibroblast growth factor 4 (194 aa).

Residues 1 to 23 (MLSAAALLPALLLGLLWPGAVRG) form the signal peptide.

Belongs to the heparin-binding growth factors family. In terms of assembly, reciprocal interactions may create a positive feedback loop between sonic hedgehog (SHH) and FGF4. Posterior ridge.

The protein resides in the secreted. Its function is as follows. Plays an important role in the regulation of embryonic development, cell proliferation, and cell differentiation. Required for normal limb development during embryogenesis. The polypeptide is Fibroblast growth factor 4 (FGF4) (Gallus gallus (Chicken)).